Reading from the N-terminus, the 358-residue chain is E3 ubiquitin-protein ligase RFI2 (358 aa).

Residues 1 to 34 are disordered; the sequence is MAGAKDSGCDDDLRIAGGCDPGKRGNPEDSSSPV. An RING-type; atypical zinc finger spans residues 38–83; it reads CSICLESVLDDGTRSKAKLQCGHQFHLDCIGSAFNMKGAMQCPNCR. 2 disordered regions span residues 174–201 and 248–313; these read GPAA…DHFH and SNQR…DQNV. Over residues 187–201 the composition is skewed to basic and acidic residues; that stretch reads TDDHPWNSHSNDHFH. Over residues 248-266 the composition is skewed to polar residues; it reads SNQRSSPAINSYQGSSTQM. Residues 299–309 show a composition bias toward pro residues; the sequence is LPPPPPPPPMP.

The protein resides in the nucleus. The catalysed reaction is S-ubiquitinyl-[E2 ubiquitin-conjugating enzyme]-L-cysteine + [acceptor protein]-L-lysine = [E2 ubiquitin-conjugating enzyme]-L-cysteine + N(6)-ubiquitinyl-[acceptor protein]-L-lysine.. Its pathway is protein modification; protein ubiquitination. Functionally, mediates phytochrome (phyA and phyB)-controlled seedling deetiolation responses such as hypocotyl elongation in response to red and far-red light. Required for light-induced expression of LHCB3 and CHALCONE SYNTHASE (CHS). Negatively regulates CONSTANS (CO) and FLOWERING LOCUS T (FT) expression and photoperiodic flowering. The chain is E3 ubiquitin-protein ligase RFI2 from Arabidopsis thaliana (Mouse-ear cress).